Reading from the N-terminus, the 340-residue chain is 7,8-didemethyl-8-hydroxy-5-deazariboflavin synthase (340 aa).

Residues A25–N256 form the Radical SAM core domain. [4Fe-4S] cluster contacts are provided by C39, C43, and C46.

This sequence belongs to the radical SAM superfamily. CofG family. Consists of two subunits, CofG and CofH. [4Fe-4S] cluster is required as a cofactor.

It catalyses the reaction 5-amino-5-(4-hydroxybenzyl)-6-(D-ribitylimino)-5,6-dihydrouracil + S-adenosyl-L-methionine = 7,8-didemethyl-8-hydroxy-5-deazariboflavin + 5'-deoxyadenosine + L-methionine + NH4(+) + H(+). Its pathway is cofactor biosynthesis; coenzyme F0 biosynthesis. Its function is as follows. Catalyzes the radical-mediated synthesis of 7,8-didemethyl-8-hydroxy-5-deazariboflavin from 5-amino-5-(4-hydroxybenzyl)-6-(D-ribitylimino)-5,6-dihydrouracil. This is 7,8-didemethyl-8-hydroxy-5-deazariboflavin synthase from Trichormus variabilis (strain ATCC 29413 / PCC 7937) (Anabaena variabilis).